We begin with the raw amino-acid sequence, 393 residues long: Biotin synthase, mitochondrial (393 aa).

The N-terminal 20 residues, 1 to 20 (MSVSFTRSFPRAFIRSYGTV), are a transit peptide targeting the mitochondrion. Residues 81–310 (SAIQMCTLMN…ATIVRLAAGR (230 aa)) enclose the Radical SAM core domain. Positions 96, 100, and 103 each coordinate [4Fe-4S] cluster. [2Fe-2S] cluster-binding residues include Cys140, Cys173, Cys233, and Arg305. The disordered stretch occupies residues 366–393 (NAATPQQHVDSVAHESEKNPAAPAAEAL).

It belongs to the radical SAM superfamily. Biotin synthase family. [4Fe-4S] cluster serves as cofactor. It depends on [2Fe-2S] cluster as a cofactor.

It localises to the mitochondrion. The enzyme catalyses (4R,5S)-dethiobiotin + (sulfur carrier)-SH + 2 reduced [2Fe-2S]-[ferredoxin] + 2 S-adenosyl-L-methionine = (sulfur carrier)-H + biotin + 2 5'-deoxyadenosine + 2 L-methionine + 2 oxidized [2Fe-2S]-[ferredoxin]. Its pathway is cofactor biosynthesis; biotin biosynthesis; biotin from 7,8-diaminononanoate: step 2/2. Functionally, biotin synthase; part of the cluster involved in the biosynthesis of biotin (also known as vitamin B8 or vitamin H), a water-soluble vitamin that functions as a prosthetic group of many carboxylases, such as acetyl-CoA carboxylase and pyruvate carboxylase. Catalyzes the conversion of dethiobiotin (DTB) to biotin by the insertion of a sulfur atom into dethiobiotin via a radical-based mechanism. The protein is Biotin synthase, mitochondrial of Emericella nidulans (strain FGSC A4 / ATCC 38163 / CBS 112.46 / NRRL 194 / M139) (Aspergillus nidulans).